The chain runs to 282 residues: 4-diphosphocytidyl-2-C-methyl-D-erythritol kinase (282 aa).

Lys-12 is an active-site residue. Residue 95 to 105 (PMGGGIGGGSS) coordinates ATP. Asp-137 is an active-site residue.

Belongs to the GHMP kinase family. IspE subfamily.

It carries out the reaction 4-CDP-2-C-methyl-D-erythritol + ATP = 4-CDP-2-C-methyl-D-erythritol 2-phosphate + ADP + H(+). The protein operates within isoprenoid biosynthesis; isopentenyl diphosphate biosynthesis via DXP pathway; isopentenyl diphosphate from 1-deoxy-D-xylulose 5-phosphate: step 3/6. Functionally, catalyzes the phosphorylation of the position 2 hydroxy group of 4-diphosphocytidyl-2C-methyl-D-erythritol. In Pseudomonas aeruginosa (strain ATCC 15692 / DSM 22644 / CIP 104116 / JCM 14847 / LMG 12228 / 1C / PRS 101 / PAO1), this protein is 4-diphosphocytidyl-2-C-methyl-D-erythritol kinase.